The following is a 167-amino-acid chain: Large ribosomal subunit protein uL10 (167 aa).

This sequence belongs to the universal ribosomal protein uL10 family. Part of the ribosomal stalk of the 50S ribosomal subunit. The N-terminus interacts with L11 and the large rRNA to form the base of the stalk. The C-terminus forms an elongated spine to which L12 dimers bind in a sequential fashion forming a multimeric L10(L12)X complex.

Functionally, forms part of the ribosomal stalk, playing a central role in the interaction of the ribosome with GTP-bound translation factors. In Streptococcus mutans serotype c (strain ATCC 700610 / UA159), this protein is Large ribosomal subunit protein uL10.